A 313-amino-acid polypeptide reads, in one-letter code: B3 domain-containing protein At2g31720 (313 aa).

Positions 80-110 are disordered; the sequence is KNQDPEQNPNRVASSPSSCHLESKRPQKVVS. Residues 84–99 are compositionally biased toward polar residues; that stretch reads PEQNPNRVASSPSSCH. Residues 169–267 constitute a DNA-binding region (TF-B3); that stretch reads WKQILDMDFL…MLFFAFVLSD (99 aa).

The protein resides in the nucleus. This Arabidopsis thaliana (Mouse-ear cress) protein is B3 domain-containing protein At2g31720 (ARF70).